Consider the following 245-residue polypeptide: Uridylate kinase (245 aa).

12–15 serves as a coordination point for ATP; the sequence is KLSG. Residues 20–25 are involved in allosteric activation by GTP; the sequence is GEKGVG. G54 contributes to the UMP binding site. ATP contacts are provided by G55 and R59. UMP is bound by residues D74 and 135 to 142; that span reads IGSPYFST. Residues N163, Y169, and D172 each contribute to the ATP site.

The protein belongs to the UMP kinase family. Homohexamer.

The protein resides in the cytoplasm. It carries out the reaction UMP + ATP = UDP + ADP. Its pathway is pyrimidine metabolism; CTP biosynthesis via de novo pathway; UDP from UMP (UMPK route): step 1/1. Its activity is regulated as follows. Allosterically activated by GTP. Inhibited by UTP. Its function is as follows. Catalyzes the reversible phosphorylation of UMP to UDP. The polypeptide is Uridylate kinase (Streptococcus thermophilus (strain ATCC BAA-491 / LMD-9)).